A 597-amino-acid polypeptide reads, in one-letter code: MKNIRNFSIIAHIDHGKSTLADRFIQYCGGLDLREMSTQVLDSMDIEKERGITIKAQTAALNYKARDGQVYQLNLIDTPGHVDFSYEVSRSLSACEGALLVVDASQGVEAQTVANCYTAIDLGVEVVPVLNKIDLPAADPERVEQEIEDIIGIDAVGAVQCSAKSGIGVEDVLEEIVAKIPAPTGDENAPLQAVIVDSWFDNYVGVVMLIRVKNGTIKLKDKVRFMSTKAETQVEQLGVFTPKSVQKQELKAGEVGFLITGVKELGQAKVGDTVTLVANPATEPLPGFQEVQSQVFAGLYPVESHDYEALRDALEKLQLNDASLKFEPEVSQALGFGFRCGFLGLLHLEIVQERLEREFDMDLITTAPTVVYEVVLKNGEKIEVENPSKLPDIGSIETILEPIITATILVPQEYVGNVMTLCNQKRGVQVNMQYMGRQVMLTYDLPMNEVVMDFFDKLKSTSRGYASLDYHFKEFQPSDLIKLDIMVNGEKVDALSLIVHRQSAVHRGRELASKMRELIPRQMFDIAVQAAIGSQIIARENVKALRKNVLAKCYGGDITRKKKLLEKQKAGKRRMKQVGNVEIPQSAFLAILQVSDK.

The tr-type G domain occupies 2 to 184 (KNIRNFSIIA…EIVAKIPAPT (183 aa)). Residues 14-19 (DHGKST) and 131-134 (NKID) each bind GTP.

This sequence belongs to the TRAFAC class translation factor GTPase superfamily. Classic translation factor GTPase family. LepA subfamily.

It localises to the cell inner membrane. The enzyme catalyses GTP + H2O = GDP + phosphate + H(+). In terms of biological role, required for accurate and efficient protein synthesis under certain stress conditions. May act as a fidelity factor of the translation reaction, by catalyzing a one-codon backward translocation of tRNAs on improperly translocated ribosomes. Back-translocation proceeds from a post-translocation (POST) complex to a pre-translocation (PRE) complex, thus giving elongation factor G a second chance to translocate the tRNAs correctly. Binds to ribosomes in a GTP-dependent manner. In Neisseria meningitidis serogroup C (strain 053442), this protein is Elongation factor 4.